The primary structure comprises 342 residues: Farnesyl pyrophosphate synthase (342 aa).

Isopentenyl diphosphate-binding residues include Lys47, Arg50, and Gln86. 2 residues coordinate Mg(2+): Asp93 and Asp97. Arg102 lines the dimethylallyl diphosphate pocket. Arg103 contributes to the isopentenyl diphosphate binding site. Dimethylallyl diphosphate contacts are provided by Lys190, Thr191, Gln229, Lys246, and Lys255.

The protein belongs to the FPP/GGPP synthase family. Homodimer. It depends on Mg(2+) as a cofactor. In terms of tissue distribution, mostly expressed in roots and seeds, and to a lower extent, in leaves and stems.

The protein resides in the cytoplasm. The enzyme catalyses isopentenyl diphosphate + dimethylallyl diphosphate = (2E)-geranyl diphosphate + diphosphate. The catalysed reaction is isopentenyl diphosphate + (2E)-geranyl diphosphate = (2E,6E)-farnesyl diphosphate + diphosphate. It participates in isoprenoid biosynthesis; farnesyl diphosphate biosynthesis; farnesyl diphosphate from geranyl diphosphate and isopentenyl diphosphate: step 1/1. The protein operates within isoprenoid biosynthesis; geranyl diphosphate biosynthesis; geranyl diphosphate from dimethylallyl diphosphate and isopentenyl diphosphate: step 1/1. Its activity is regulated as follows. Stimulated by methyl jasmonate (MeJA). Its function is as follows. Catalyzes the sequential condensation of isopentenyl pyrophosphate with the allylic pyrophosphates, dimethylallyl pyrophosphate, and then with the resultant geranylpyrophosphate to the ultimate product farnesyl pyrophosphate. Component of the triterpene saponins (e.g. ginsenosides or panaxosides) and phytosterols biosynthetic pathways. Promotes the accumulation of ginsenosides. This Panax ginseng (Korean ginseng) protein is Farnesyl pyrophosphate synthase.